We begin with the raw amino-acid sequence, 332 residues long: Sesquiterpene synthase MBR_10393 (332 aa).

2 residues coordinate Mg(2+): D91 and D96. The DDXXXD motif motif lies at 91–96 (DDLFVD). R184 contacts substrate. Residues N230, S234, and E238 each coordinate Mg(2+).

Belongs to the terpene synthase family. Requires Mg(2+) as cofactor.

It carries out the reaction (2E,6E)-farnesyl diphosphate + H2O = (+)-corvol ether B + diphosphate. The enzyme catalyses (2E,6E)-farnesyl diphosphate + H2O = (+)-corvol ether A + diphosphate. Functionally, terpene synthase that catalyzes the conversion of (2E,6E)-farnesyl diphosphate (FPP) into sesquiterpenes which are important for fungi-environment interactions. Produces a mixture consisting of 8 sesquiterpenes including corvol ethers A and B, as well as traces of epizonarene, gamma-cadinene, delta-cadinene, alpha-cadinene, alpha-cadinol, and an unidentified sesquiterpene. The major product is corvol ether B. The polypeptide is Sesquiterpene synthase MBR_10393 (Metarhizium brunneum (strain ARSEF 3297)).